Reading from the N-terminus, the 510-residue chain is Putative thymidine phosphorylase (510 aa).

This sequence belongs to the thymidine/pyrimidine-nucleoside phosphorylase family. Type 2 subfamily.

It carries out the reaction thymidine + phosphate = 2-deoxy-alpha-D-ribose 1-phosphate + thymine. The chain is Putative thymidine phosphorylase from Nitrobacter hamburgensis (strain DSM 10229 / NCIMB 13809 / X14).